The sequence spans 274 residues: Cytochrome c oxidase subunit 3 (274 aa).

The next 7 membrane-spanning stretches (helical) occupy residues 22–42 (PSPWPLGASVACLILTLGGVM), 47–67 (FAAGDIGLPLGLILVLASMLL), 93–113 (GVVLFIVSEILLFFSLFWAFF), 137–157 (PFEVPLLNTIILLTSGCTITV), 170–190 (TILYLILTILLAWMFLGLQWV), 208–228 (FFVATGFHGLHVMIGTIFLTV), and 248–268 (AAIWYWHVVDVIWLFLYVSVY).

The protein belongs to the cytochrome c oxidase subunit 3 family. Component of the cytochrome c oxidase (complex IV, CIV), a multisubunit enzyme composed of a catalytic core of 3 subunits and several supernumerary subunits. The complex exists as a monomer or a dimer and forms supercomplexes (SCs) in the inner mitochondrial membrane with ubiquinol-cytochrome c oxidoreductase (cytochrome b-c1 complex, complex III, CIII).

The protein resides in the mitochondrion inner membrane. It carries out the reaction 4 Fe(II)-[cytochrome c] + O2 + 8 H(+)(in) = 4 Fe(III)-[cytochrome c] + 2 H2O + 4 H(+)(out). In terms of biological role, component of the cytochrome c oxidase, the last enzyme in the mitochondrial electron transport chain which drives oxidative phosphorylation. The respiratory chain contains 3 multisubunit complexes succinate dehydrogenase (complex II, CII), ubiquinol-cytochrome c oxidoreductase (cytochrome b-c1 complex, complex III, CIII) and cytochrome c oxidase (complex IV, CIV), that cooperate to transfer electrons derived from NADH and succinate to molecular oxygen, creating an electrochemical gradient over the inner membrane that drives transmembrane transport and the ATP synthase. Cytochrome c oxidase is the component of the respiratory chain that catalyzes the reduction of oxygen to water. Electrons originating from reduced cytochrome c in the intermembrane space (IMS) are transferred via the dinuclear copper A center (CU(A)) of subunit 2 and heme A of subunit 1 to the active site in subunit 1, a binuclear center (BNC) formed by heme A3 and copper B (CU(B)). The BNC reduces molecular oxygen to 2 water molecules using 4 electrons from cytochrome c in the IMS and 4 protons from the mitochondrial matrix. This chain is Cytochrome c oxidase subunit 3 (COX3), found in Allomyces macrogynus.